Here is a 201-residue protein sequence, read N- to C-terminus: GTP cyclohydrolase 1 (201 aa).

The interval Met1–Ala20 is disordered. Residues Cys91, His94, and Cys162 each contribute to the Zn(2+) site.

Belongs to the GTP cyclohydrolase I family. As to quaternary structure, homomer.

It catalyses the reaction GTP + H2O = 7,8-dihydroneopterin 3'-triphosphate + formate + H(+). The protein operates within cofactor biosynthesis; 7,8-dihydroneopterin triphosphate biosynthesis; 7,8-dihydroneopterin triphosphate from GTP: step 1/1. The chain is GTP cyclohydrolase 1 from Allorhizobium ampelinum (strain ATCC BAA-846 / DSM 112012 / S4) (Agrobacterium vitis (strain S4)).